Reading from the N-terminus, the 136-residue chain is Large ribosomal subunit protein uL16 (136 aa).

It belongs to the universal ribosomal protein uL16 family. In terms of assembly, part of the 50S ribosomal subunit.

Binds 23S rRNA and is also seen to make contacts with the A and possibly P site tRNAs. The sequence is that of Large ribosomal subunit protein uL16 from Vesicomyosocius okutanii subsp. Calyptogena okutanii (strain HA).